Here is a 171-residue protein sequence, read N- to C-terminus: Co-chaperone protein HscB (171 aa).

One can recognise a J domain in the interval 2–74 (DYFTLFGLPA…LTRAEYLLSL (73 aa)).

It belongs to the HscB family. As to quaternary structure, interacts with HscA and stimulates its ATPase activity. Interacts with IscU.

Co-chaperone involved in the maturation of iron-sulfur cluster-containing proteins. Seems to help targeting proteins to be folded toward HscA. The protein is Co-chaperone protein HscB of Salmonella arizonae (strain ATCC BAA-731 / CDC346-86 / RSK2980).